The primary structure comprises 167 residues: Small ribosomal subunit protein uS5 (167 aa).

One can recognise an S5 DRBM domain in the interval 11 to 74; the sequence is LQEKLIAVNR…EKARRNMINV (64 aa).

It belongs to the universal ribosomal protein uS5 family. In terms of assembly, part of the 30S ribosomal subunit. Contacts proteins S4 and S8.

Its function is as follows. With S4 and S12 plays an important role in translational accuracy. Located at the back of the 30S subunit body where it stabilizes the conformation of the head with respect to the body. The chain is Small ribosomal subunit protein uS5 from Klebsiella pneumoniae subsp. pneumoniae (strain ATCC 700721 / MGH 78578).